Reading from the N-terminus, the 461-residue chain is Tumor necrosis factor receptor superfamily member 1A (461 aa).

Residues 1–29 (MGLSTVPGLLLPLVLRALLVDVYPAGVHG) form the signal peptide. Residues 30 to 210 (LVLHPGDREK…RNDFQDTGTT (181 aa)) lie on the Extracellular side of the membrane. 4 TNFR-Cys repeats span residues 43-82 (LCPQGKYSHPQNRSICCTKCHKGTYLHNDCLGPGLDTDCR), 83-125 (ECDN…DTVC), 126-166 (GCRK…DTIC), and 167-195 (NCHSGFFLRDKECVSCVNCKNADCKNLCP). Cystine bridges form between C44-C58, C59-C72, C62-C81, C84-C99, C102-C117, C105-C125, and C127-C143. N54 is a glycosylation site (N-linked (GlcNAc...) asparagine). The N-linked (GlcNAc...) asparagine glycan is linked to N86. N-linked (GlcNAc...) asparagine glycans are attached at residues N145 and N151. Intrachain disulfides connect C146–C158, C149–C166, C168–C179, C182–C194, and C185–C190. Residues 211–233 (VLLPLVIFFGLCLAFFLFVGLAC) form a helical membrane-spanning segment. The Cytoplasmic segment spans residues 234 to 461 (RYQRWKPKLY…RLAPAPHLLR (228 aa)). Positions 340–350 (LPKWGGSAHSA) are N-SMase activation domain (NSD). The 86-residue stretch at 362-447 (PATLYAVVDG…GCLEDIEEAL (86 aa)) folds into the Death domain.

As to quaternary structure, binding of TNF to the extracellular domain leads to homotrimerization. The aggregated death domains provide a novel molecular interface that interacts specifically with the death domain of TRADD. Various TRADD-interacting proteins such as TRAFS, RIPK1 and possibly FADD, are recruited to the complex by their association with TRADD. This complex activates at least two distinct signaling cascades, apoptosis and NF-kappa-B signaling. Interacts with BAG4, BABAM2, FEM1B, GRB2, SQSTM1 and TRPC4AP. Interacts with DAB2IP. Interacts directly with NOL3 (via CARD domain); inhibits TNF-signaling pathway. Interacts with SH3RF2, TRADD and RIPK1. SH3RF2 facilitates the recruitment of RIPK1 and TRADD to TNFRSF1A in a TNF-alpha-dependent process. Interacts with PGLYRP1; this interaction is important for cell death induction. Interacts (via death domain) with MADD (via death domain).

It is found in the cell membrane. The protein resides in the golgi apparatus membrane. In terms of biological role, receptor for TNFSF2/TNF-alpha and homotrimeric TNFSF1/lymphotoxin-alpha. The adapter molecule FADD recruits caspase-8 to the activated receptor. The resulting death-inducing signaling complex (DISC) performs caspase-8 proteolytic activation which initiates the subsequent cascade of caspases (aspartate-specific cysteine proteases) mediating apoptosis. The chain is Tumor necrosis factor receptor superfamily member 1A (TNFRSF1A) from Sus scrofa (Pig).